The sequence spans 182 residues: ATP synthase subunit delta (182 aa).

Belongs to the ATPase delta chain family. As to quaternary structure, F-type ATPases have 2 components, F(1) - the catalytic core - and F(0) - the membrane proton channel. F(1) has five subunits: alpha(3), beta(3), gamma(1), delta(1), epsilon(1). F(0) has three main subunits: a(1), b(2) and c(10-14). The alpha and beta chains form an alternating ring which encloses part of the gamma chain. F(1) is attached to F(0) by a central stalk formed by the gamma and epsilon chains, while a peripheral stalk is formed by the delta and b chains.

Its subcellular location is the cell membrane. F(1)F(0) ATP synthase produces ATP from ADP in the presence of a proton or sodium gradient. F-type ATPases consist of two structural domains, F(1) containing the extramembraneous catalytic core and F(0) containing the membrane proton channel, linked together by a central stalk and a peripheral stalk. During catalysis, ATP synthesis in the catalytic domain of F(1) is coupled via a rotary mechanism of the central stalk subunits to proton translocation. Functionally, this protein is part of the stalk that links CF(0) to CF(1). It either transmits conformational changes from CF(0) to CF(1) or is implicated in proton conduction. This chain is ATP synthase subunit delta, found in Alkalihalophilus pseudofirmus (strain ATCC BAA-2126 / JCM 17055 / OF4) (Bacillus pseudofirmus).